The chain runs to 1097 residues: Translation initiation factor IF-2 (1097 aa).

The segment at leucine 79–alanine 458 is disordered. A compositionally biased stretch (basic and acidic residues) spans alanine 97–leucine 112. The span at alanine 157–glutamate 173 shows a compositional bias: low complexity. Basic and acidic residues-rich tracts occupy residues glutamate 174–serine 190 and valine 202–glutamate 221. Positions threonine 224–alanine 236 are enriched in low complexity. Residues arginine 258–serine 267 are compositionally biased toward polar residues. The segment covering glutamate 268–methionine 286 has biased composition (basic and acidic residues). Residues serine 340 to asparagine 363 show a composition bias toward polar residues. Residues histidine 376–asparagine 385 show a composition bias toward basic residues. Residues proline 402–leucine 443 show a composition bias toward basic and acidic residues. A tr-type G domain is found at threonine 591 to lysine 761. Positions glycine 600 to threonine 607 are G1. Glycine 600–threonine 607 serves as a coordination point for GTP. Positions glycine 625–histidine 629 are G2. The G3 stretch occupies residues aspartate 647–glycine 650. Residues aspartate 647 to histidine 651 and asparagine 701 to aspartate 704 contribute to the GTP site. The tract at residues asparagine 701–aspartate 704 is G4. The tract at residues serine 737 to lysine 739 is G5.

It belongs to the TRAFAC class translation factor GTPase superfamily. Classic translation factor GTPase family. IF-2 subfamily.

The protein localises to the cytoplasm. One of the essential components for the initiation of protein synthesis. Protects formylmethionyl-tRNA from spontaneous hydrolysis and promotes its binding to the 30S ribosomal subunits. Also involved in the hydrolysis of GTP during the formation of the 70S ribosomal complex. In Chloroherpeton thalassium (strain ATCC 35110 / GB-78), this protein is Translation initiation factor IF-2.